The following is a 264-amino-acid chain: Ribosomal RNA small subunit methyltransferase A (264 aa).

Residues histidine 15, leucine 17, glycine 42, glutamate 63, aspartate 88, and asparagine 109 each contribute to the S-adenosyl-L-methionine site.

The protein belongs to the class I-like SAM-binding methyltransferase superfamily. rRNA adenine N(6)-methyltransferase family. RsmA subfamily.

The protein resides in the cytoplasm. The enzyme catalyses adenosine(1518)/adenosine(1519) in 16S rRNA + 4 S-adenosyl-L-methionine = N(6)-dimethyladenosine(1518)/N(6)-dimethyladenosine(1519) in 16S rRNA + 4 S-adenosyl-L-homocysteine + 4 H(+). Specifically dimethylates two adjacent adenosines (A1518 and A1519) in the loop of a conserved hairpin near the 3'-end of 16S rRNA in the 30S particle. May play a critical role in biogenesis of 30S subunits. This Nitrosococcus oceani (strain ATCC 19707 / BCRC 17464 / JCM 30415 / NCIMB 11848 / C-107) protein is Ribosomal RNA small subunit methyltransferase A.